The primary structure comprises 958 residues: Transportin MOS14 (958 aa).

One can recognise an Importin N-terminal domain in the interval 26-93 (ADRWLQNFQG…RQSLTTLLKK (68 aa)).

Belongs to the importin beta family. Interacts with RS2Z33, RSZ21, RS31A, SR34 and RAN1.

It localises to the nucleus. Functions as a nuclear import receptor for serine-arginine rich (SR) proteins. Regulates nuclear import of SR proteins that are required for proper splicing of the two resistance (R) genes SNC1 and RPS4, a crucial step for their functions in plant immunity. In Arabidopsis thaliana (Mouse-ear cress), this protein is Transportin MOS14.